We begin with the raw amino-acid sequence, 439 residues long: Putrescine transporter PotE (439 aa).

The next 12 membrane-spanning stretches (helical) occupy residues G10 to L30, I40 to A60, T91 to G111, L114 to I134, I152 to F172, A186 to L206, I225 to I245, V276 to I296, A321 to I341, N354 to I374, V387 to G407, and A410 to P430.

The protein belongs to the amino acid-polyamine-organocation (APC) superfamily. Basic amino acid/polyamine antiporter (APA) (TC 2.A.3.2) family.

The protein resides in the cell inner membrane. The catalysed reaction is putrescine(in) + H(+)(in) = putrescine(out) + H(+)(out). It carries out the reaction putrescine(in) + L-ornithine(out) = putrescine(out) + L-ornithine(in). Its function is as follows. Catalyzes both the uptake and excretion of putrescine. The uptake of putrescine is dependent on the membrane potential and the excretion involves putrescine-ornithine antiporter activity. This is Putrescine transporter PotE from Escherichia coli O6:H1 (strain CFT073 / ATCC 700928 / UPEC).